Here is a 165-residue protein sequence, read N- to C-terminus: Transcription elongation factor GreA (165 aa).

Positions 55-78 form a coiled coil; that stretch reads AAKEEQGKQELRVRQLTQLLENAK.

The protein belongs to the GreA/GreB family.

In terms of biological role, necessary for efficient RNA polymerase transcription elongation past template-encoded arresting sites. The arresting sites in DNA have the property of trapping a certain fraction of elongating RNA polymerases that pass through, resulting in locked ternary complexes. Cleavage of the nascent transcript by cleavage factors such as GreA or GreB allows the resumption of elongation from the new 3'terminus. GreA releases sequences of 2 to 3 nucleotides. In Streptomyces avermitilis (strain ATCC 31267 / DSM 46492 / JCM 5070 / NBRC 14893 / NCIMB 12804 / NRRL 8165 / MA-4680), this protein is Transcription elongation factor GreA.